A 257-amino-acid chain; its full sequence is UPF0246 protein Sbal195_1149 (257 aa).

Belongs to the UPF0246 family.

This is UPF0246 protein Sbal195_1149 from Shewanella baltica (strain OS195).